A 232-amino-acid chain; its full sequence is Oxidoreductase 1 (232 aa).

Belongs to the MQO family. It depends on FAD as a cofactor.

Oxidoreductase; part of the gene cluster that mediates the biosynthesis of elsinochromes, pigments consisting of at least four interconvertible tautomers (A, B, C and D) that have a core phenolic quinone to which various side chains are attached and which play an important role in fungal pathogenesis. The non-reducing polyketide synthase PKS1 was proposed to iteratively catalyze decarboxylation between acetyl-CoA and malonyl-CoA subunits for polyketide chain elongation. The released polyketide undergoes cyclization to form an aromatic ring, and proceeds via serial modification steps to produce the heptaketide back- bone of elsinochrome. As elsinochrome has a symmetrical structure, two identical heptaketides are fused to form a core 1,2-dihydrobenzo-perylene ring structure, which can then be successively modified to produce the various derivatives of elsinochrome. Some of these reactions may be cooperatively carried out, at least in part, by the products of RDT1, OXR1 and PKS1. PRF1, embedded within the elsinochrome cluster possibly functions to stabilize some of the biosynthetic enzymes required for elsinochrome production. As prefoldin is a hexamer containing 2 a and 4 b subunits, additional prefoldin subunits, whose coding genes may not immediately link to the elsinochrome biosynthetic gene cluster, are required to fulfill the chaperone function. In addition, no methyltransferase-coding gene exists within the biosynthetic gene cluster, even though elsinochrome has four methyl groups at positions C3, C7, C8 and C12. Apparently, the identified gene cluster does not contain the entire entourage of genes responsible for elsinochrome biosynthesis. Once elsinochrome is synthesized, it must be exported outside the fungal cells, which is probably accomplished by the ECT1 transporter, to avoid toxicity. The sequence is that of Oxidoreductase 1 from Elsinoe fawcettii (Citrus scab fungus).